The primary structure comprises 336 residues: USG-1 protein homolog (336 aa).

It belongs to the aspartate-semialdehyde dehydrogenase family.

This is USG-1 protein homolog (usg) from Pseudomonas aeruginosa (strain ATCC 15692 / DSM 22644 / CIP 104116 / JCM 14847 / LMG 12228 / 1C / PRS 101 / PAO1).